A 406-amino-acid polypeptide reads, in one-letter code: Probable endo-xylogalacturonan hydrolase A (406 aa).

The first 18 residues, 1-18 (MLYPRNLALFSLLSLSSA), serve as a signal peptide directing secretion. PbH1 repeat units lie at residues 183 to 213 (TQHV…DIGA), 214 to 235 (STHV…AFKP), 237 to 257 (SNYV…SVGS), and 299 to 320 (VKNV…QIES). Aspartate 228 (proton donor) is an active-site residue. Histidine 251 is a catalytic residue. A glycan (N-linked (GlcNAc...) asparagine) is linked at asparagine 301.

It belongs to the glycosyl hydrolase 28 family.

It is found in the secreted. Its function is as follows. Pectinolytic enzyme involved in the degradation of xylogalacturonan (xga), a galacturonan backbone heavily substituted with xylose, and which is one important component of the hairy regions of pectin. Activity requires a galacturonic acid backbone substituted with xylose. The chain is Probable endo-xylogalacturonan hydrolase A (xghA) from Aspergillus fumigatus (strain ATCC MYA-4609 / CBS 101355 / FGSC A1100 / Af293) (Neosartorya fumigata).